The following is a 238-amino-acid chain: uncharacterized protein (238 aa).

A run of 7 helical transmembrane segments spans residues 19 to 39 (FIYGMLLANPVWAHIFLLLGW), 64 to 84 (WSVIYFAAAVIFAIPALIYNW), 85 to 105 (QVLYFMFAMLPFVAVNIYFTK), 112 to 132 (LWNDLAGILIFALAGMGSYYF), 141 to 161 (ILWVAIYPTLFFIGTTLYVKS), 176 to 196 (VIFHLLCALIFVVSQQFILAL), and 218 to 238 (VGLIEFAITAVFFILLLVATL).

To B.subtilis YwiC.

It localises to the cell membrane. This is an uncharacterized protein from Haemophilus influenzae (strain ATCC 51907 / DSM 11121 / KW20 / Rd).